Here is a 303-residue protein sequence, read N- to C-terminus: Hydroxyethylthiazole kinase (303 aa).

Residues 1-15 are compositionally biased toward polar residues; the sequence is MTTASTTPNSDTSNL. Positions 1 to 23 are disordered; sequence MTTASTTPNSDTSNLHEVAPDDP. Met67 contacts substrate. ATP is bound by residues Arg142 and Ser206. Gly233 lines the substrate pocket.

The protein belongs to the Thz kinase family. It depends on Mg(2+) as a cofactor.

It catalyses the reaction 5-(2-hydroxyethyl)-4-methylthiazole + ATP = 4-methyl-5-(2-phosphooxyethyl)-thiazole + ADP + H(+). The protein operates within cofactor biosynthesis; thiamine diphosphate biosynthesis; 4-methyl-5-(2-phosphoethyl)-thiazole from 5-(2-hydroxyethyl)-4-methylthiazole: step 1/1. Functionally, catalyzes the phosphorylation of the hydroxyl group of 4-methyl-5-beta-hydroxyethylthiazole (THZ). The polypeptide is Hydroxyethylthiazole kinase (Bifidobacterium animalis subsp. lactis (strain AD011)).